We begin with the raw amino-acid sequence, 501 residues long: ATP synthase subunit alpha (501 aa).

Residue 169–176 (GDRQTGKT) participates in ATP binding.

Belongs to the ATPase alpha/beta chains family. F-type ATPases have 2 components, CF(1) - the catalytic core - and CF(0) - the membrane proton channel. CF(1) has five subunits: alpha(3), beta(3), gamma(1), delta(1), epsilon(1). CF(0) has three main subunits: a(1), b(2) and c(9-12). The alpha and beta chains form an alternating ring which encloses part of the gamma chain. CF(1) is attached to CF(0) by a central stalk formed by the gamma and epsilon chains, while a peripheral stalk is formed by the delta and b chains.

Its subcellular location is the cell membrane. The catalysed reaction is ATP + H2O + 4 H(+)(in) = ADP + phosphate + 5 H(+)(out). In terms of biological role, produces ATP from ADP in the presence of a proton gradient across the membrane. The alpha chain is a regulatory subunit. The sequence is that of ATP synthase subunit alpha from Streptococcus pneumoniae serotype 19F (strain G54).